The chain runs to 145 residues: D-aminoacyl-tRNA deacylase (145 aa).

A Gly-cisPro motif, important for rejection of L-amino acids motif is present at residues 133–134; sequence GP.

The protein belongs to the DTD family. In terms of assembly, homodimer.

It localises to the cytoplasm. The catalysed reaction is glycyl-tRNA(Ala) + H2O = tRNA(Ala) + glycine + H(+). The enzyme catalyses a D-aminoacyl-tRNA + H2O = a tRNA + a D-alpha-amino acid + H(+). Functionally, an aminoacyl-tRNA editing enzyme that deacylates mischarged D-aminoacyl-tRNAs. Also deacylates mischarged glycyl-tRNA(Ala), protecting cells against glycine mischarging by AlaRS. Acts via tRNA-based rather than protein-based catalysis; rejects L-amino acids rather than detecting D-amino acids in the active site. By recycling D-aminoacyl-tRNA to D-amino acids and free tRNA molecules, this enzyme counteracts the toxicity associated with the formation of D-aminoacyl-tRNA entities in vivo and helps enforce protein L-homochirality. The polypeptide is D-aminoacyl-tRNA deacylase (Cutibacterium acnes (strain DSM 16379 / KPA171202) (Propionibacterium acnes)).